Consider the following 186-residue polypeptide: Ribosome-recycling factor (186 aa).

This sequence belongs to the RRF family.

It is found in the cytoplasm. Responsible for the release of ribosomes from messenger RNA at the termination of protein biosynthesis. May increase the efficiency of translation by recycling ribosomes from one round of translation to another. This chain is Ribosome-recycling factor, found in Cupriavidus pinatubonensis (strain JMP 134 / LMG 1197) (Cupriavidus necator (strain JMP 134)).